The following is a 183-amino-acid chain: Ras-related protein Rap-2a (183 aa).

10 to 17 (GSGGVGKS) provides a ligand contact to GTP. The Effector region motif lies at 32 to 40 (YDPTIEDFY). T35 carries a (Microbial infection) O-linked (Glc) threonine; by C.difficile toxin TcdA, and by P.sordellii toxin TcsL glycan. GTP-binding positions include 57–61 (DTAGT) and 116–119 (NKVD). 2 S-palmitoyl cysteine lipidation sites follow: C176 and C177. A Cysteine methyl ester modification is found at C180. C180 carries the S-farnesyl cysteine lipid modification. Residues 181–183 (NIQ) constitute a propeptide, removed in mature form.

Belongs to the small GTPase superfamily. Ras family. Interacts (GTP-bound form) with RUNDC3A. Interacts with RGS14; the interaction is GTP-dependent. Interacts with PLCE1. Interacts with ARHGAP29, SGSM1, SGSM2 and SGSM3. Interacts (GTP-bound form preferentially) with TNIK (via the CNH domain); the interaction is direct and recruits RAP2A to the E3 ubiquitin ligase NEDD4. Interacts with MINK1. Interacts (GTP-bound form preferentially) with MAP4K4. Interacts with cytoskeletal actin. Post-translationally, ubiquitinated; undergoes 'Lys-63' monoubiquitination and diubiquitination by NEDD4. Multiple lysine residues are probably modified. Ubiquitination requires TNIK, prevents interaction with effectors and inactivates RAP2A. Ubiquitination by the ECS(RAB40B) complex leads to RAP2A localization to lamellipodia plasma membrane, activation, and regulation of sorting at early endosomes for recycling to the lamellipodia plasma membrane. Palmitoylated. Palmitoylation is required for association with recycling endosome membranes and activation of TNIK. In terms of processing, (Microbial infection) Glucosylated at Thr-35 by C.difficile toxin TcdA in the colonic epithelium, and by P.sordellii toxin TcsL in the vascular endothelium.

The protein localises to the midbody. It localises to the cell projection. Its subcellular location is the lamellipodium membrane. The protein resides in the golgi apparatus. It is found in the recycling endosome membrane. The protein localises to the lysosome. It carries out the reaction GTP + H2O = GDP + phosphate + H(+). Activated by the guanine nucleotide-exchange factors RAPGEF3 and RAPGEF4 in a cAMP-dependent manner. Nucleotide exchange is also specifically stimulated by RAPGEF5, RASGEF1A and RASGEF1B. Small GTP-binding protein which cycles between a GDP-bound inactive and a GTP-bound active form. In its active form interacts with and regulates several effectors including MAP4K4, MINK1 and TNIK. Part of a signaling complex composed of NEDD4, RAP2A and TNIK which regulates neuronal dendrite extension and arborization during development. More generally, it is part of several signaling cascades and regulates cytoskeletal rearrangements, cell migration, cell adhesion and cell spreading. This chain is Ras-related protein Rap-2a, found in Homo sapiens (Human).